A 1006-amino-acid polypeptide reads, in one-letter code: DNA ligase 4 (1006 aa).

The segment at 1 to 36 (MDSDDDYNGPADTNPRLEDEESDLDEKYPNRPRNHS) is disordered. ATP contacts are provided by Glu318, Lys320, Leu321, Arg325, Glu387, Phe427, Glu487, Lys492, Lys509, and Lys511. Lys320 functions as the N6-AMP-lysine intermediate in the catalytic mechanism. Glu387 is a Mg(2+) binding site. Glu487 contacts Mg(2+). BRCT domains follow at residues 718–811 (PSGN…PDSL) and 890–1002 (PSGW…GFQP).

This sequence belongs to the ATP-dependent DNA ligase family. The cofactor is Mg(2+).

Its subcellular location is the nucleus. The enzyme catalyses ATP + (deoxyribonucleotide)n-3'-hydroxyl + 5'-phospho-(deoxyribonucleotide)m = (deoxyribonucleotide)n+m + AMP + diphosphate.. Its function is as follows. DNA ligase involved in DNA non-homologous end joining (NHEJ); required for double-strand break (DSB) repair. The protein is DNA ligase 4 (lig4) of Aspergillus oryzae (strain ATCC 42149 / RIB 40) (Yellow koji mold).